The following is a 941-amino-acid chain: RNA-binding protein 4F (941 aa).

Residues 1–13 (MDADKQLERQLEK) show a composition bias toward basic and acidic residues. A disordered region spans residues 1-149 (MDADKQLERQ…DSDNAGGGNQ (149 aa)). The segment covering 14–32 (ELDEMPAEDLDDDAYDEYD) has biased composition (acidic residues). Polar residues predominate over residues 42–52 (GSPQQGHSESP). Serine 43 carries the phosphoserine modification. Positions 55–65 (EEEHKSEELRQ) are enriched in basic and acidic residues. The span at 87–98 (SSDDEPSVEETE) shows a compositional bias: acidic residues. The segment covering 111–134 (DSSSSSDDVGVIEGSELESNSEVS) has biased composition (low complexity). Phosphoserine is present on serine 153. The segment at 629–713 (RSRIKPNSQS…GPANAEAKES (85 aa)) is disordered. The segment covering 671–680 (EQQQQQQQQQ) has biased composition (low complexity). A Phosphoserine modification is found at serine 713. Position 717 is a phosphotyrosine (tyrosine 717). At serine 718 the chain carries Phosphoserine. Residues 724–801 (NKIFVRNLHP…MNISVAISNP (78 aa)) enclose the RRM domain. Composition is skewed to basic and acidic residues over residues 862–902 (EANG…KGDD), 913–922 (QKGDEKKEEE), and 930–941 (SNDDFRKLFLKD). The disordered stretch occupies residues 862–941 (EANGEEQKGD…DDFRKLFLKD (80 aa)).

It is found in the cytoplasm. Functionally, may be involved in gene regulation during development. Binds RNA. This is RNA-binding protein 4F from Drosophila melanogaster (Fruit fly).